A 400-amino-acid polypeptide reads, in one-letter code: Tryptophan synthase beta chain (400 aa).

The residue at position 90 (lysine 90) is an N6-(pyridoxal phosphate)lysine.

This sequence belongs to the TrpB family. As to quaternary structure, tetramer of two alpha and two beta chains. Requires pyridoxal 5'-phosphate as cofactor.

It catalyses the reaction (1S,2R)-1-C-(indol-3-yl)glycerol 3-phosphate + L-serine = D-glyceraldehyde 3-phosphate + L-tryptophan + H2O. It functions in the pathway amino-acid biosynthesis; L-tryptophan biosynthesis; L-tryptophan from chorismate: step 5/5. Functionally, the beta subunit is responsible for the synthesis of L-tryptophan from indole and L-serine. The sequence is that of Tryptophan synthase beta chain from Bacillus velezensis (strain DSM 23117 / BGSC 10A6 / LMG 26770 / FZB42) (Bacillus amyloliquefaciens subsp. plantarum).